A 368-amino-acid polypeptide reads, in one-letter code: MSILEQVQPIETMLPERYYTMSTEDMEKRVREIKEKMGKMLFIPGHHYQKDEVVQFSDAVGDSLQLAQVAASNKDAKYIVFCGVHFMAETADMLTTDDQVVILPDMRAGCSMADMADIEQTERAWKELTKLFGDTMIPLTYVNSTAAIKAFCGRNGGATVTSSNAKQMVSWAFTQKERLVFLPDQHLGRNTAYDLGIPLDKMAVWDPHTDSLEYDGDIEEIQVILWKGHCSVHQNFTVKNIESVRKNHSDMNIIVHPECCYEVVAASDYAGSTKYIIDMIESAPPGSKWAIGTEMNLVNRIIQQHPDKEIVSLNPFMCPCLTMNRIDLPHLLWALETIERGEEINVISVDKQVTAEAVLALNRMLERV.

The iminosuccinate site is built by histidine 46 and serine 63. Cysteine 110 serves as a coordination point for [4Fe-4S] cluster. Residues 141 to 143 and serine 162 each bind iminosuccinate; that span reads YVN. Cysteine 230 is a [4Fe-4S] cluster binding site. Iminosuccinate is bound by residues 256-258 and threonine 273; that span reads HPE. Residue cysteine 320 coordinates [4Fe-4S] cluster.

Belongs to the quinolinate synthase family. Type 3 subfamily. Requires [4Fe-4S] cluster as cofactor.

The protein resides in the cytoplasm. The catalysed reaction is iminosuccinate + dihydroxyacetone phosphate = quinolinate + phosphate + 2 H2O + H(+). The protein operates within cofactor biosynthesis; NAD(+) biosynthesis; quinolinate from iminoaspartate: step 1/1. Its function is as follows. Catalyzes the condensation of iminoaspartate with dihydroxyacetone phosphate to form quinolinate. This Bacillus cereus (strain ATCC 14579 / DSM 31 / CCUG 7414 / JCM 2152 / NBRC 15305 / NCIMB 9373 / NCTC 2599 / NRRL B-3711) protein is Quinolinate synthase.